A 67-amino-acid chain; its full sequence is uncharacterized protein (67 aa).

A coiled-coil region spans residues 17 to 47; the sequence is AASLQELEKKINTQIENNKAIMLRVKSVSHQ.

This is an uncharacterized protein from Bacillus subtilis (strain 168).